The chain runs to 673 residues: MGAWKVWTFFAIALVVAVKAYDEEAKCMSHDEDSQVKERQILHIVDSINKPISPDFRAPRGVIDEHKLRGLGTLKKREIFSLFDERNWDEASKVVRLLLDAKDFDDFIDVAEVIRLRVNEELFLYAFSVAVMHRGDTQGLQVPRIHDIFPDKFLKEDVIHRLLELSNRGEHYDRIPIIDATQISHNYLDPNSELEYFLEDLGLNSHHHHWHVIHPAIWVSELGNEKDRKGEFFYWMHHQMLARYEAERMSNGLARTRTFQNWNDPIDEGYAPHISIMKTGYTYAYRPPGYTLRDLPNLPKNKMVEWAKRVLYSIHSGIFHFSNGTDAHLDTEHGIDELGNIVESSLTSLNRDYYGNLHCYAHVIAGRIADPEGKYGEDNGVMYDVATSARDPLFYRWHKYIDNIFQEYKNTLPPYTTEELTPQNSEFRVQGISVVGETSARDTVHTYWQHSLLKVGQGFEFTKHTPAYVKVKHLQHESFTYVIDVENRGRTRTGFFRIFAAPKYNELGQKWHINDQRLIMVEMDKFIEKLYPGKNTIERHSEDSTVTMSSASIFSDISSEQSEDHCSCGWPDYLLVPKGNFEGFPMEVFVIVTDYEEDKVEGPDEGCACHDALTYCGGIDYHFPDKRAMGFPFDRPIKQRNFNAFKTKNMGKVTVDVKFTGETIAPEDFHNQH.

The first 20 residues, Met1–Ala20, serve as a signal peptide directing secretion. Cu cation is bound by residues His207, His211, and His237. N-linked (GlcNAc...) asparagine glycosylation is present at Asn323. 3 residues coordinate Cu cation: His358, His362, and His398. Cys568 and Cys616 are joined by a disulfide.

It belongs to the tyrosinase family. Hemocyanin subfamily. 36-chain polymer consisting of 6 hexamers, each of which includes 4 different chains, A, B, C and D. In terms of tissue distribution, hemolymph.

It localises to the secreted. Its subcellular location is the extracellular space. Functionally, hemocyanins are copper-containing oxygen carriers occurring freely dissolved in the hemolymph of many mollusks and arthropods. The chain is Hemocyanin subunit C (HCC) from Scutigera coleoptrata (House centipede).